A 165-amino-acid chain; its full sequence is Transcription antitermination protein NusB (165 aa).

The protein belongs to the NusB family.

Involved in transcription antitermination. Required for transcription of ribosomal RNA (rRNA) genes. Binds specifically to the boxA antiterminator sequence of the ribosomal RNA (rrn) operons. The chain is Transcription antitermination protein NusB from Rhodococcus erythropolis (strain PR4 / NBRC 100887).